We begin with the raw amino-acid sequence, 387 residues long: MSHRKYEAPRHGHLGFLPRKRAASVRGRVKSFPKDDKSKPVALTSFLGYKAGMTTIVRDLDRPGSKFHKREIVEAVTVVDTPPVVVVGVVGYVETPRGLRSLTTVWAEHLSDEVKRRFYKNWYKSKKKAFTKYSAKYAQNGAEIERELARIKKYATVVRVLVHTQVRKTPLVQKKAHLAEIQLNGGSISEKVDWAREHFEKTVSVDSVFEQNEMIDAIAVTKGHGFEGVTHRWGTKKLPRKTHRGLRKVACIGAWHPAHVMWSVARAGQRGYHHRTSINHKIYRIGKGDDEGNAATNFDRTKKTINPMGGFVHYGMVNNDFVMVKGSIPGCKKRVVTLRKSLYTNTSRKAVEEVTLKWIDTASKFGKGRFQTPAEKHAFMGTLKKDL.

This sequence belongs to the universal ribosomal protein uL3 family.

Its subcellular location is the cytoplasm. This is Large ribosomal subunit protein uL3 (RPL3) from Candida glabrata (strain ATCC 2001 / BCRC 20586 / JCM 3761 / NBRC 0622 / NRRL Y-65 / CBS 138) (Yeast).